A 600-amino-acid polypeptide reads, in one-letter code: Nisin transport ATP-binding protein NisT (600 aa).

5 helical membrane-spanning segments follow: residues A34–I54, L69–L89, A147–T167, W168–L188, and I260–S280. Positions A34–N317 constitute an ABC transmembrane type-1 domain. One can recognise an ABC transporter domain in the interval V352–S592. ATP is bound at residue G386–S393.

Belongs to the ABC transporter superfamily. Nisin exporter (TC 3.A.1.111.3) family.

It is found in the cell membrane. In terms of biological role, probably implicated in the export process of the lantibiotic nisin. In Lactococcus lactis subsp. lactis (Streptococcus lactis), this protein is Nisin transport ATP-binding protein NisT (nisT).